A 272-amino-acid chain; its full sequence is Phosphoglycolate phosphatase (272 aa).

The active-site Nucleophile is the Asp19. Mg(2+) contacts are provided by Asp19, Asp21, and Asp182.

Belongs to the HAD-like hydrolase superfamily. CbbY/CbbZ/Gph/YieH family. Mg(2+) is required as a cofactor.

It catalyses the reaction 2-phosphoglycolate + H2O = glycolate + phosphate. The protein operates within organic acid metabolism; glycolate biosynthesis; glycolate from 2-phosphoglycolate: step 1/1. Specifically catalyzes the dephosphorylation of 2-phosphoglycolate. Is involved in the dissimilation of the intracellular 2-phosphoglycolate formed during the DNA repair of 3'-phosphoglycolate ends, a major class of DNA lesions induced by oxidative stress. This Pseudomonas putida (strain ATCC 47054 / DSM 6125 / CFBP 8728 / NCIMB 11950 / KT2440) protein is Phosphoglycolate phosphatase.